Consider the following 656-residue polypeptide: F-box/LRR-repeat protein 10 (656 aa).

The F-box domain maps to 20–66 (ERSLDLLPAALLETIMTKLDVASLCSLASTCKTLKSCVTRVLTFTPN). LRR repeat units follow at residues 71-96 (NVSL…KLDC), 120-145 (CRDF…CLGS), 151-176 (GRSI…ALMF), 194-221 (SDRL…EISG), 243-268 (VDCI…DIRD), 277-301 (VSDL…SLIR), 310-335 (FRRV…CLGG), 336-361 (FCRV…SIYH), 362-387 (GPKL…SLRR), 388-412 (CHLL…DLRG), 413-437 (CRNL…LLDG), 439-463 (DISD…SVRG), 464-491 (CRNL…DLSN), 492-517 (LPNL…QLRE), 518-551 (CRLI…DLYD), and 552-578 (CGGI…GITG). Residues 632-656 (ILGDEGDVEMEDAEDESEEDASEED) form a disordered region.

This chain is F-box/LRR-repeat protein 10 (FBL10), found in Arabidopsis thaliana (Mouse-ear cress).